Consider the following 184-residue polypeptide: Gremlin-1 (184 aa).

Positions 1–24 are cleaved as a signal peptide; it reads MNRTAYTVGALLLLLGTLLPAAEG. N-linked (GlcNAc...) asparagine glycosylation is found at asparagine 2 and asparagine 42. Positions 24–78 are disordered; sequence GKKKGSQGAIPPPDKAQHNDSEQTQSPPQPGSRTRGRGQGRGTAMPGEEVLESSQ. 4 cysteine pairs are disulfide-bonded: cysteine 94-cysteine 144, cysteine 108-cysteine 158, cysteine 118-cysteine 176, and cysteine 122-cysteine 178. Residues 94–184 enclose the CTCK domain; the sequence is CKTQPLKQTI…QCRCISIDLD (91 aa).

The protein belongs to the DAN family. Homodimer; can also form homooligomers. Interacts with BMP2; can form higher oligomers with BMP2. Interacts with SLIT1 and SLIT2 in a glycosylation-dependent manner. Highly expressed in the brain, kidney, spleen, and testis and weakly expressed in the lung and liver. Predominantly expressed in differentiated cells as neurons in brain, type I cells in lung and globlet cells in intestine.

It is found in the secreted. Cytokine that may play an important role during carcinogenesis and metanephric kidney organogenesis, as a BMP antagonist required for early limb outgrowth and patterning in maintaining the FGF4-SHH feedback loop. Down-regulates the BMP4 signaling in a dose-dependent manner. Antagonist of BMP2; inhibits BMP2-mediated differentiation of osteoblasts (in vitro). Acts as inhibitor of monocyte chemotaxis. Can inhibit the growth or viability of normal cells but not transformed cells when is overexpressed. This Rattus norvegicus (Rat) protein is Gremlin-1 (Grem1).